Consider the following 175-residue polypeptide: Adenine phosphoribosyltransferase (175 aa).

Belongs to the purine/pyrimidine phosphoribosyltransferase family. As to quaternary structure, homodimer.

Its subcellular location is the cytoplasm. It catalyses the reaction AMP + diphosphate = 5-phospho-alpha-D-ribose 1-diphosphate + adenine. It functions in the pathway purine metabolism; AMP biosynthesis via salvage pathway; AMP from adenine: step 1/1. Functionally, catalyzes a salvage reaction resulting in the formation of AMP, that is energically less costly than de novo synthesis. The sequence is that of Adenine phosphoribosyltransferase from Caldicellulosiruptor saccharolyticus (strain ATCC 43494 / DSM 8903 / Tp8T 6331).